A 372-amino-acid chain; its full sequence is Tetraacyldisaccharide 4'-kinase (372 aa).

60 to 67 (TVGGSGKT) is an ATP binding site.

The protein belongs to the LpxK family.

The catalysed reaction is a lipid A disaccharide + ATP = a lipid IVA + ADP + H(+). It participates in glycolipid biosynthesis; lipid IV(A) biosynthesis; lipid IV(A) from (3R)-3-hydroxytetradecanoyl-[acyl-carrier-protein] and UDP-N-acetyl-alpha-D-glucosamine: step 6/6. Transfers the gamma-phosphate of ATP to the 4'-position of a tetraacyldisaccharide 1-phosphate intermediate (termed DS-1-P) to form tetraacyldisaccharide 1,4'-bis-phosphate (lipid IVA). The sequence is that of Tetraacyldisaccharide 4'-kinase from Psychrobacter cryohalolentis (strain ATCC BAA-1226 / DSM 17306 / VKM B-2378 / K5).